The chain runs to 171 residues: Antimicrobial protein CAP18 (171 aa).

An N-terminal signal peptide occupies residues 1–29; it reads METHKHGPSLAWWSLLLLLLGLLMPPAIA. 2 disulfides stabilise this stretch: Cys85–Cys96 and Cys107–Cys124.

The protein belongs to the cathelicidin family. In terms of tissue distribution, neutrophils.

It localises to the secreted. Its function is as follows. CAP18 binds to the lipid A moiety of bacterial lipopolysaccharides (LPS), a glycolipid present in the outer membrane of all Gram-negative bacteria. Has antibiotic activity. The polypeptide is Antimicrobial protein CAP18 (CAP18) (Oryctolagus cuniculus (Rabbit)).